A 133-amino-acid chain; its full sequence is Small ribosomal subunit protein uS8 (133 aa).

This sequence belongs to the universal ribosomal protein uS8 family. In terms of assembly, part of the 30S ribosomal subunit. Contacts proteins S5 and S12.

Its function is as follows. One of the primary rRNA binding proteins, it binds directly to 16S rRNA central domain where it helps coordinate assembly of the platform of the 30S subunit. In Chlamydia trachomatis serovar A (strain ATCC VR-571B / DSM 19440 / HAR-13), this protein is Small ribosomal subunit protein uS8.